The following is a 522-amino-acid chain: DNA-binding protein Ikaros (522 aa).

Disordered stretches follow at residues 1–48 (MEME…HNNR) and 96–115 (AKVN…YSSA). C2H2-type zinc fingers lie at residues 125–147 (LKCD…KRSH), 153–175 (FQCT…IKLH), 181–203 (FKCH…LRTH), and 209–232 (HKCA…ERCH). Residues 379–406 (KSASSEKDGSPSHSGQDSTDTESNNEEK) form a disordered region. 2 C2H2-type zinc fingers span residues 468-490 (YRCE…MGCH) and 496-520 (FECN…RGEH).

This sequence belongs to the Ikaros C2H2-type zinc-finger protein family. As to expression, expression mainly limited to thymus, spleen and pronephros. Very low expression in liver. No expression in testis, brain, eye and muscle.

It is found in the nucleus. In terms of biological role, binds and activates the enhancer (delta-A element) of the CD3-delta gene. Functions in the specification and the maturation of the T-lymphocyte. Also interacts with a critical control element in the TDT (terminal deoxynucleotidyltransferase) promoter as well as with the promoters for other genes expressed during early stages of B- and T-cell development. Function is isoform-specific and is modulated by dominant-negative inactive isoforms. This Oncorhynchus mykiss (Rainbow trout) protein is DNA-binding protein Ikaros (ikzf1).